A 135-amino-acid polypeptide reads, in one-letter code: Large ribosomal subunit protein uL16 (135 aa).

Belongs to the universal ribosomal protein uL16 family. Part of the 50S ribosomal subunit.

Binds 23S rRNA and is also seen to make contacts with the A and possibly P site tRNAs. This Desulforapulum autotrophicum (strain ATCC 43914 / DSM 3382 / VKM B-1955 / HRM2) (Desulfobacterium autotrophicum) protein is Large ribosomal subunit protein uL16.